We begin with the raw amino-acid sequence, 314 residues long: uncharacterized protein (314 aa).

Disordered regions lie at residues 170-203 (RSSMNSQSQMSESSFPTPIDPPPRIPHPPLNPDE) and 258-314 (VGES…PKKR). Residues 171–186 (SSMNSQSQMSESSFPT) are compositionally biased toward low complexity. Residues 187–200 (PIDPPPRIPHPPLN) are compositionally biased toward pro residues. Residues 261–272 (SSRQGENTQNVH) are compositionally biased toward polar residues. Over residues 289–303 (RFKDDARKSNEDEHM) the composition is skewed to basic and acidic residues.

This is an uncharacterized protein from Arabidopsis thaliana (Mouse-ear cress).